The chain runs to 343 residues: Farnesyl pyrophosphate synthase (343 aa).

Isopentenyl diphosphate is bound by residues Lys-49, Arg-52, and Gln-87. Asp-94 and Asp-98 together coordinate Mg(2+). Residue Arg-103 participates in dimethylallyl diphosphate binding. An isopentenyl diphosphate-binding site is contributed by Arg-104. The dimethylallyl diphosphate site is built by Lys-191, Thr-192, Gln-230, Lys-247, and Lys-256.

The protein belongs to the FPP/GGPP synthase family. It depends on Mg(2+) as a cofactor. As to expression, expressed both in apical and sub-apical cells of glandular secretory trichomes.

It localises to the cytoplasm. Its subcellular location is the nucleus. The enzyme catalyses isopentenyl diphosphate + dimethylallyl diphosphate = (2E)-geranyl diphosphate + diphosphate. It carries out the reaction isopentenyl diphosphate + (2E)-geranyl diphosphate = (2E,6E)-farnesyl diphosphate + diphosphate. It participates in isoprenoid biosynthesis; farnesyl diphosphate biosynthesis; farnesyl diphosphate from geranyl diphosphate and isopentenyl diphosphate: step 1/1. Its pathway is sesquiterpene biosynthesis. It functions in the pathway isoprenoid biosynthesis; geranyl diphosphate biosynthesis; geranyl diphosphate from dimethylallyl diphosphate and isopentenyl diphosphate: step 1/1. Its function is as follows. Involved in the biosynthesis of the antimalarial endoperoxide artemisinin. Catalyzes the sequential condensation of isopentenyl pyrophosphate with the allylic pyrophosphates, dimethylallyl pyrophosphate, and then with the resultant geranylpyrophosphate to the ultimate product farnesyl pyrophosphate. Promotes anti-malarial and antimicrobial (toward Gram-positive bacteria B.subtilis and S.aureus) activities of plant crude extract probably by triggering artemisinin levels. The sequence is that of Farnesyl pyrophosphate synthase from Artemisia annua (Sweet wormwood).